Reading from the N-terminus, the 591-residue chain is Protein misato homolog 1 (591 aa).

The protein belongs to the misato family.

Its subcellular location is the mitochondrion outer membrane. It is found in the cytoplasm. Involved in the regulation of mitochondrial distribution and morphology. Required for mitochondrial fusion and mitochondrial network formation. This Danio rerio (Zebrafish) protein is Protein misato homolog 1 (msto1).